Reading from the N-terminus, the 40-residue chain is Mu-thomitoxin-Hme1b (40 aa).

3 disulfides stabilise this stretch: cysteine 2–cysteine 18, cysteine 9–cysteine 22, and cysteine 17–cysteine 33.

Belongs to the neurotoxin 19 (CSTX) family. In terms of processing, contains 3 disulfide bonds. In terms of tissue distribution, expressed by the venom gland.

The protein localises to the secreted. Its function is as follows. Blocks the Nav1.2/SCN2A, Nav1.4/SCN4A, Nav1.5/SCN5A and Nav1.6/SCN8A sodium channels. Shows a slight preference for the Nav1.2 and Nav1.4 channels. Reduces the peak amplitude of the sodium current and negatively shifts the steady-state inactivation process. Does not shift the threshold potential of activation or the voltage corresponding to maximal current. Does not change the reversal potential of the sodium current. May act on site 1 of the receptor. This is Mu-thomitoxin-Hme1b from Heriaeus mellotteei (Crab spider).